Reading from the N-terminus, the 589-residue chain is PTS system mannitol-specific EIICB component (589 aa).

Residues 1 to 25 (MERKSSLKVRVQKLGTSLSNMVMPN) lie on the Cytoplasmic side of the membrane. In terms of domain architecture, PTS EIIC type-2 spans 14-347 (LGTSLSNMVM…ILKSDNSDDD (334 aa)). Residues 26-47 (IGAFIAWGVAASLFIATGYLPN) traverse the membrane as a helical segment. Topologically, residues 48–51 (KALD) are extracellular. A helical membrane pass occupies residues 52-73 (TNVVGPMLKYVLPLLIGYTGGY). Topologically, residues 74-136 (NIHKQRGGVI…TGFEMLVNNF (63 aa)) are cytoplasmic. A helical membrane pass occupies residues 137-158 (SLGLIGFALMVLAFFVIGPVVA). Topologically, residues 159-167 (QLTEWVGIG) are extracellular. The chain crosses the membrane as a helical span at residues 168–188 (VEAIVKVHLLPLANLIIEPAK). Residues 189 to 275 (ILFLNNALNH…VMMKPAMFLA (87 aa)) are Cytoplasmic-facing. A helical membrane pass occupies residues 276 to 295 (VIAGGLTGTFTFQTLGAGLT). Residues 296-317 (APASPGSIIAIMGMSPKGWGPH) lie on the Extracellular side of the membrane. The chain crosses the membrane as a helical span at residues 318–339 (LVVLAGVFAAAVASFLVASIIL). Residues 340–589 (KSDNSDDDSL…YDKLVARMHK (250 aa)) are Cytoplasmic-facing. In terms of domain architecture, PTS EIIB type-2 spans 383-478 (HQIIFACDAG…SLTNGKASGS (96 aa)). Cys389 serves as the catalytic Phosphocysteine intermediate; for EIIB activity. The residue at position 389 (Cys389) is a Phosphocysteine; by EIIA.

In terms of assembly, homodimer.

The protein resides in the cell membrane. It carries out the reaction D-mannitol(out) + N(pros)-phospho-L-histidyl-[protein] = D-mannitol 1-phosphate(in) + L-histidyl-[protein]. Functionally, the phosphoenolpyruvate-dependent sugar phosphotransferase system (sugar PTS), a major carbohydrate active transport system, catalyzes the phosphorylation of incoming sugar substrates concomitantly with their translocation across the cell membrane. The enzyme II CmtAB PTS system is involved in D-mannitol transport. The protein is PTS system mannitol-specific EIICB component of Streptococcus mutans serotype c (strain ATCC 700610 / UA159).